The primary structure comprises 378 residues: UDP-N-acetylglucosamine--N-acetylmuramyl-(pentapeptide) pyrophosphoryl-undecaprenol N-acetylglucosamine transferase (378 aa).

Residues 14–16 (TGG), asparagine 125, arginine 165, serine 193, and glutamine 293 each bind UDP-N-acetyl-alpha-D-glucosamine.

Belongs to the glycosyltransferase 28 family. MurG subfamily.

Its subcellular location is the cell inner membrane. The catalysed reaction is di-trans,octa-cis-undecaprenyl diphospho-N-acetyl-alpha-D-muramoyl-L-alanyl-D-glutamyl-meso-2,6-diaminopimeloyl-D-alanyl-D-alanine + UDP-N-acetyl-alpha-D-glucosamine = di-trans,octa-cis-undecaprenyl diphospho-[N-acetyl-alpha-D-glucosaminyl-(1-&gt;4)]-N-acetyl-alpha-D-muramoyl-L-alanyl-D-glutamyl-meso-2,6-diaminopimeloyl-D-alanyl-D-alanine + UDP + H(+). It participates in cell wall biogenesis; peptidoglycan biosynthesis. Functionally, cell wall formation. Catalyzes the transfer of a GlcNAc subunit on undecaprenyl-pyrophosphoryl-MurNAc-pentapeptide (lipid intermediate I) to form undecaprenyl-pyrophosphoryl-MurNAc-(pentapeptide)GlcNAc (lipid intermediate II). This is UDP-N-acetylglucosamine--N-acetylmuramyl-(pentapeptide) pyrophosphoryl-undecaprenol N-acetylglucosamine transferase from Bartonella henselae (strain ATCC 49882 / DSM 28221 / CCUG 30454 / Houston 1) (Rochalimaea henselae).